A 388-amino-acid polypeptide reads, in one-letter code: Succinate--CoA ligase [ADP-forming] subunit beta (388 aa).

The 236-residue stretch at 9 to 244 (KEIFARYGLP…PTQESELEVK (236 aa)) folds into the ATP-grasp domain. ATP is bound by residues Lys46, 53 to 55 (GRG), Glu99, Thr102, and Glu107. Mg(2+) is bound by residues Asn199 and Asp213. Substrate is bound by residues Asn264 and 321-323 (GIL).

The protein belongs to the succinate/malate CoA ligase beta subunit family. In terms of assembly, heterotetramer of two alpha and two beta subunits. It depends on Mg(2+) as a cofactor.

The catalysed reaction is succinate + ATP + CoA = succinyl-CoA + ADP + phosphate. It catalyses the reaction GTP + succinate + CoA = succinyl-CoA + GDP + phosphate. The protein operates within carbohydrate metabolism; tricarboxylic acid cycle; succinate from succinyl-CoA (ligase route): step 1/1. In terms of biological role, succinyl-CoA synthetase functions in the citric acid cycle (TCA), coupling the hydrolysis of succinyl-CoA to the synthesis of either ATP or GTP and thus represents the only step of substrate-level phosphorylation in the TCA. The beta subunit provides nucleotide specificity of the enzyme and binds the substrate succinate, while the binding sites for coenzyme A and phosphate are found in the alpha subunit. This chain is Succinate--CoA ligase [ADP-forming] subunit beta, found in Persephonella marina (strain DSM 14350 / EX-H1).